A 145-amino-acid polypeptide reads, in one-letter code: Large ribosomal subunit protein uL11 (145 aa).

The protein belongs to the universal ribosomal protein uL11 family. Part of the ribosomal stalk of the 50S ribosomal subunit. Interacts with L10 and the large rRNA to form the base of the stalk. L10 forms an elongated spine to which L12 dimers bind in a sequential fashion forming a multimeric L10(L12)X complex. One or more lysine residues are methylated.

Functionally, forms part of the ribosomal stalk which helps the ribosome interact with GTP-bound translation factors. This Rickettsia felis (strain ATCC VR-1525 / URRWXCal2) (Rickettsia azadi) protein is Large ribosomal subunit protein uL11.